The following is a 316-amino-acid chain: Daunorubicin resistance ATP-binding protein DrrA3 (316 aa).

In terms of domain architecture, ABC transporter spans 6–236 (ITVDGAEKRY…TGGDRIDVVL (231 aa)). ATP is bound at residue 38–45 (GPNGAGKT).

Belongs to the ABC transporter superfamily. Drug exporter-1 (DrugE1) (TC 3.A.1.105) family. In terms of assembly, the complex is probably composed of two ATP-binding proteins (DrrA3) and two transmembrane proteins (DrrB3).

It is found in the cell membrane. The catalysed reaction is daunorubicin(in) + ATP + H2O = daunorubicin(out) + ADP + phosphate + H(+). Its function is as follows. Part of the ABC transporter complex DrrA3B3 involved in daunorubicin efflux. Responsible for energy coupling to the transport system. Confers self-resistance to daunorubicin, an antibiotic produced by S.coeruleorubidus. The efficiency of DrrA3B3 to export daunorubicin is probably lower than that of DrrA1B1 or DrrA2B2. The protein is Daunorubicin resistance ATP-binding protein DrrA3 of Streptomyces coeruleorubidus.